We begin with the raw amino-acid sequence, 172 residues long: MMKFMCICLCAISAVSANSYGRSRGGYGGAPVGGYAYQVQPALTVKAIVPSYGGGYGGNHGGYGGAYESVPVPVSSAYSGANVGSQYSGSGYGGAPPVDAQAIALAKLALAAPSAGAPLVWKEAPRYAQPVYPPTSYVNQEYGHSEKVKGGSAAAAASSVAAGKKGYKRPSY.

The first 17 residues, 1-17 (MMKFMCICLCAISAVSA), serve as a signal peptide directing secretion.

It belongs to the chorion protein S15/S18 family.

The protein resides in the secreted. In terms of biological role, chorion membrane (egg shell) protein; plays a role in protecting the egg from the environment. The sequence is that of Chorion protein S18 (Cp18) from Drosophila melanogaster (Fruit fly).